Reading from the N-terminus, the 241-residue chain is Uracil-DNA glycosylase (241 aa).

The active-site Proton acceptor is the Asp71.

It belongs to the uracil-DNA glycosylase (UDG) superfamily. UNG family.

It is found in the cytoplasm. The enzyme catalyses Hydrolyzes single-stranded DNA or mismatched double-stranded DNA and polynucleotides, releasing free uracil.. Excises uracil residues from the DNA which can arise as a result of misincorporation of dUMP residues by DNA polymerase or due to deamination of cytosine. The polypeptide is Uracil-DNA glycosylase (Xanthomonas euvesicatoria pv. vesicatoria (strain 85-10) (Xanthomonas campestris pv. vesicatoria)).